Here is an 83-residue protein sequence, read N- to C-terminus: Small ribosomal subunit protein bS16 (83 aa).

This sequence belongs to the bacterial ribosomal protein bS16 family.

This chain is Small ribosomal subunit protein bS16, found in Borrelia turicatae (strain 91E135).